The primary structure comprises 460 residues: Zinc transporter 6 (460 aa).

At 1–33 the chain is on the cytoplasmic side; that stretch reads MGTIHLFRKSQRSLVGKLTHEFRLVAADRRSWK. The chain crosses the membrane as a helical span at residues 34–54; that stretch reads ILLFGAINLICIGFLLMWCSS. Residues 55-64 lie on the Extracellular side of the membrane; the sequence is TNSIALTAYT. The chain crosses the membrane as a helical span at residues 65–85; that stretch reads YLTIFDLFSLITCLISYWVMV. At 86–98 the chain is on the cytoplasmic side; that stretch reads KKPSPVYSFGFER. Residues 99 to 119 traverse the membrane as a helical segment; that stretch reads FEVLAVFASTVLAQLGALFIL. Topologically, residues 120–134 are extracellular; it reads KESAERFLEQPEIHT. The chain crosses the membrane as a helical span at residues 135 to 155; the sequence is GRLLVGTFVALFFNLFTMLSV. Topologically, residues 156 to 200 are cytoplasmic; it reads RNKPFAYVSEAASTSWLQEHVADLSRSICGIIPGLSSIFLPRMNP. Residues 201–221 form a helical membrane-spanning segment; that stretch reads FVLIDIAGALALCITYMLIEI. Over 222 to 228 the chain is Extracellular; the sequence is NNYYAVD. The chain crosses the membrane as a helical span at residues 229–249; sequence TASAIAIALMTFGTMYPMSVY. The Cytoplasmic segment spans residues 250 to 460; the sequence is SGKVLLQTTP…GTNTRGQSRP (211 aa). Positions 372 to 392 are disordered; that stretch reads PVTSTPAKPSSPPPEFSFNTP.

This sequence belongs to the cation diffusion facilitator (CDF) transporter (TC 2.A.4) family. SLC30A subfamily. Heterodimer with SLC30A5; form a functional zinc ion transmembrane transporter.

The protein localises to the golgi apparatus. It is found in the trans-Golgi network membrane. In terms of biological role, has probably no intrinsic transporter activity but together with SLC30A5 forms a functional zinc ion:proton antiporter heterodimer, mediating zinc entry into the lumen of organelles along the secretory pathway. As part of that zinc ion:proton antiporter, contributes to zinc ion homeostasis within the early secretory pathway and regulates the activation and folding of enzymes like alkaline phosphatases and enzymes involved in phosphatidylinositol glycan anchor biosynthesis. The sequence is that of Zinc transporter 6 (SLC30A6) from Gallus gallus (Chicken).